The chain runs to 406 residues: Arginine deiminase (406 aa).

C396 functions as the Amidino-cysteine intermediate in the catalytic mechanism.

Belongs to the arginine deiminase family.

The protein localises to the cytoplasm. The catalysed reaction is L-arginine + H2O = L-citrulline + NH4(+). It functions in the pathway amino-acid degradation; L-arginine degradation via ADI pathway; carbamoyl phosphate from L-arginine: step 1/2. In Salmonella typhimurium (strain LT2 / SGSC1412 / ATCC 700720), this protein is Arginine deiminase.